The sequence spans 241 residues: DNA repair protein RecO (241 aa).

Belongs to the RecO family.

Involved in DNA repair and RecF pathway recombination. The polypeptide is DNA repair protein RecO (Orientia tsutsugamushi (strain Boryong) (Rickettsia tsutsugamushi)).